We begin with the raw amino-acid sequence, 585 residues long: DNA mismatch repair protein MutL (585 aa).

The protein belongs to the DNA mismatch repair MutL/HexB family.

In terms of biological role, this protein is involved in the repair of mismatches in DNA. It is required for dam-dependent methyl-directed DNA mismatch repair. May act as a 'molecular matchmaker', a protein that promotes the formation of a stable complex between two or more DNA-binding proteins in an ATP-dependent manner without itself being part of a final effector complex. The chain is DNA mismatch repair protein MutL from Methanoculleus marisnigri (strain ATCC 35101 / DSM 1498 / JR1).